We begin with the raw amino-acid sequence, 240 residues long: 7-cyano-7-deazaguanine synthase (240 aa).

Residue 9-19 (FSGGLDSTACL) coordinates ATP. Zn(2+) is bound by residues cysteine 195, cysteine 210, cysteine 213, and cysteine 216.

Belongs to the QueC family. Zn(2+) is required as a cofactor.

It catalyses the reaction 7-carboxy-7-deazaguanine + NH4(+) + ATP = 7-cyano-7-deazaguanine + ADP + phosphate + H2O + H(+). The protein operates within purine metabolism; 7-cyano-7-deazaguanine biosynthesis. Catalyzes the ATP-dependent conversion of 7-carboxy-7-deazaguanine (CDG) to 7-cyano-7-deazaguanine (preQ(0)). This chain is 7-cyano-7-deazaguanine synthase, found in Pyrococcus furiosus (strain ATCC 43587 / DSM 3638 / JCM 8422 / Vc1).